We begin with the raw amino-acid sequence, 146 residues long: MTKKIEEKIEGVIESLGYLLYDVSLVKENEQHVLRVSLKNPNGAVSLDICQQVSEIISPLLDVCDFIQDAYILEVSSMGLERTLKTPKHFKLSLGEKVEVKLINKESFQAVLKDANDLSADFELDNHAIKSVEYKDLKKVKTLFEW.

This sequence belongs to the RimP family.

The protein localises to the cytoplasm. Its function is as follows. Required for maturation of 30S ribosomal subunits. The polypeptide is Ribosome maturation factor RimP (Helicobacter pylori (strain J99 / ATCC 700824) (Campylobacter pylori J99)).